The following is a 291-amino-acid chain: ATP synthase gamma chain (291 aa).

This sequence belongs to the ATPase gamma chain family. F-type ATPases have 2 components, CF(1) - the catalytic core - and CF(0) - the membrane proton channel. CF(1) has five subunits: alpha(3), beta(3), gamma(1), delta(1), epsilon(1). CF(0) has three main subunits: a, b and c.

The protein resides in the cell inner membrane. Functionally, produces ATP from ADP in the presence of a proton gradient across the membrane. The gamma chain is believed to be important in regulating ATPase activity and the flow of protons through the CF(0) complex. The chain is ATP synthase gamma chain from Variovorax paradoxus (strain S110).